Consider the following 525-residue polypeptide: DNA polymerase epsilon subunit 2 (525 aa).

This sequence belongs to the DNA polymerase epsilon subunit B family. As to quaternary structure, component of the epsilon DNA polymerase complex consisting of four subunits: the catalytic subunit PolE1/DNApol-epsilon255 and the accessory subunits PolE2/DNApol-epsilon58, Chrac-14/DNApolE3 and PolE4.

The protein resides in the nucleus. In terms of biological role, accessory component of the DNA polymerase epsilon complex. Participates in DNA repair and in chromosomal DNA replication. Has a role in the entrance and progression through S phase. Has a role in endoreplication. Essential for viability and tissue development. The chain is DNA polymerase epsilon subunit 2 from Drosophila melanogaster (Fruit fly).